The following is a 156-amino-acid chain: Melatonin receptor type 1A (156 aa).

The next 3 membrane-spanning stretches (helical) occupy residues 19-39 (LCYV…NLQT), 62-82 (TIAL…FCYL), and 115-135 (FVVF…GLIV).

This sequence belongs to the G-protein coupled receptor 1 family. In terms of tissue distribution, at least in the brain, more precisely in the pars tuberalis and the suprachiasmatic nucleus.

It is found in the cell membrane. Functionally, high affinity receptor for melatonin. Likely to mediate the reproductive and circadian actions of melatonin. The activity of this receptor is mediated by pertussis toxin sensitive G proteins that inhibit adenylate cyclase activity. Possibly involved in sleep induction, by melatonin activation of the potassium channel KCNMA1/BK and the dissociation of G-beta and G-gamma subunits, thereby decreasing synaptic transmission. The polypeptide is Melatonin receptor type 1A (Mtnr1a) (Rattus norvegicus (Rat)).